A 563-amino-acid chain; its full sequence is Putative inactive polypeptide N-acetylgalactosaminyltransferase 12 (563 aa).

Topologically, residues 1–6 (MEVFAS) are cytoplasmic. Residues 7–29 (VLNCCFKYIVLPVWIFIVLLLLH) traverse the membrane as a helical; Signal-anchor for type II membrane protein segment. Over 30–563 (RDLSSWDGLM…SVMQSANILV (534 aa)) the chain is Lumenal. Residue Asn50 is glycosylated (N-linked (GlcNAc...) asparagine). Cys97 and Cys334 form a disulfide bridge. Positions 109 to 225 (MKPASIIMIF…NGWLSPLLDT (117 aa)) are catalytic subdomain A. Residues 280–342 (PYEVAAVRTS…PCSRVGHLQP (63 aa)) are catalytic subdomain B. Residues Asn389 and Asn428 are each glycosylated (N-linked (GlcNAc...) asparagine). Residues 433–549 (ASGHVKTLEF…ANGKQRWILD (117 aa)) form the Ricin B-type lectin domain. A disulfide bridge connects residues Cys446 and Cys461. Asn464 and Asn469 each carry an N-linked (GlcNAc...) asparagine glycan. 2 cysteine pairs are disulfide-bonded: Cys485–Cys499 and Cys523–Cys537. Asn552 is a glycosylation site (N-linked (GlcNAc...) asparagine).

It belongs to the glycosyltransferase 2 family. GalNAc-T subfamily.

It is found in the golgi apparatus membrane. Its function is as follows. Probable inactive glycosyltransferase. The polypeptide is Putative inactive polypeptide N-acetylgalactosaminyltransferase 12 (pgant12) (Drosophila melanogaster (Fruit fly)).